A 184-amino-acid polypeptide reads, in one-letter code: Mediator of RNA polymerase II transcription subunit 28 (184 aa).

Positions 77–105 (LLKEENFDLKQEIARKDELIRKHYEKIES) form a coiled coil.

The protein belongs to the Mediator complex subunit 28 family. Component of the Mediator complex.

It localises to the nucleus. Functionally, component of the Mediator complex, a coactivator involved in the regulated transcription of nearly all RNA polymerase II-dependent genes. Mediator functions as a bridge to convey information from gene-specific regulatory proteins to the basal RNA polymerase II transcription machinery. Mediator is recruited to promoters by direct interactions with regulatory proteins and serves as a scaffold for the assembly of a functional preinitiation complex with RNA polymerase II and the general transcription factors. The sequence is that of Mediator of RNA polymerase II transcription subunit 28 (MED28) from Aedes aegypti (Yellowfever mosquito).